The chain runs to 363 residues: Peptide chain release factor 1 (363 aa).

Q237 carries the N5-methylglutamine modification. Over residues 284–296 (EDEKRRSAEESTR) the composition is skewed to basic and acidic residues. The tract at residues 284–305 (EDEKRRSAEESTRRSLVASGDR) is disordered.

This sequence belongs to the prokaryotic/mitochondrial release factor family. Post-translationally, methylated by PrmC. Methylation increases the termination efficiency of RF1.

It localises to the cytoplasm. Peptide chain release factor 1 directs the termination of translation in response to the peptide chain termination codons UAG and UAA. This chain is Peptide chain release factor 1, found in Shewanella baltica (strain OS185).